A 90-amino-acid chain; its full sequence is Probable Fe(2+)-trafficking protein (90 aa).

This sequence belongs to the Fe(2+)-trafficking protein family.

Could be a mediator in iron transactions between iron acquisition and iron-requiring processes, such as synthesis and/or repair of Fe-S clusters in biosynthetic enzymes. The polypeptide is Probable Fe(2+)-trafficking protein (Haemophilus influenzae (strain 86-028NP)).